We begin with the raw amino-acid sequence, 359 residues long: Carbamoyl phosphate synthase small chain (359 aa).

The interval 1–169 (MTKRILVLED…TKTSYPAPGV (169 aa)) is CPSase. Positions 46, 220, and 222 each coordinate L-glutamine. The 187-residue stretch at 172–358 (SVVLVDFGLK…IEMMEVFKQS (187 aa)) folds into the Glutamine amidotransferase type-1 domain. The active-site Nucleophile is cysteine 247. L-glutamine is bound by residues methionine 248, glutamine 251, asparagine 289, glycine 291, and tyrosine 292. Catalysis depends on residues histidine 331 and aspartate 333.

It belongs to the CarA family. In terms of assembly, composed of two chains; the small (or glutamine) chain promotes the hydrolysis of glutamine to ammonia, which is used by the large (or ammonia) chain to synthesize carbamoyl phosphate. Tetramer of heterodimers (alpha,beta)4.

The catalysed reaction is hydrogencarbonate + L-glutamine + 2 ATP + H2O = carbamoyl phosphate + L-glutamate + 2 ADP + phosphate + 2 H(+). The enzyme catalyses L-glutamine + H2O = L-glutamate + NH4(+). Its pathway is amino-acid biosynthesis; L-arginine biosynthesis; carbamoyl phosphate from bicarbonate: step 1/1. It functions in the pathway pyrimidine metabolism; UMP biosynthesis via de novo pathway; (S)-dihydroorotate from bicarbonate: step 1/3. In terms of biological role, small subunit of the glutamine-dependent carbamoyl phosphate synthetase (CPSase). CPSase catalyzes the formation of carbamoyl phosphate from the ammonia moiety of glutamine, carbonate, and phosphate donated by ATP, constituting the first step of 2 biosynthetic pathways, one leading to arginine and/or urea and the other to pyrimidine nucleotides. The small subunit (glutamine amidotransferase) binds and cleaves glutamine to supply the large subunit with the substrate ammonia. The sequence is that of Carbamoyl phosphate synthase small chain from Streptococcus pneumoniae (strain ATCC BAA-255 / R6).